Reading from the N-terminus, the 331-residue chain is CRISPR-associated endonuclease Cas1 (331 aa).

Residues E155, H221, and E236 each coordinate Mn(2+).

It belongs to the CRISPR-associated endonuclease Cas1 family. As to quaternary structure, homodimer, forms a heterotetramer with a Cas2 homodimer. Requires Mg(2+) as cofactor. It depends on Mn(2+) as a cofactor.

Functionally, CRISPR (clustered regularly interspaced short palindromic repeat), is an adaptive immune system that provides protection against mobile genetic elements (viruses, transposable elements and conjugative plasmids). CRISPR clusters contain spacers, sequences complementary to antecedent mobile elements, and target invading nucleic acids. CRISPR clusters are transcribed and processed into CRISPR RNA (crRNA). Acts as a dsDNA endonuclease. Involved in the integration of spacer DNA into the CRISPR cassette. This is CRISPR-associated endonuclease Cas1 from Methanopyrus kandleri (strain AV19 / DSM 6324 / JCM 9639 / NBRC 100938).